We begin with the raw amino-acid sequence, 304 residues long: dTDP-4-dehydrorhamnose reductase (304 aa).

NADH contacts are provided by residues 16 to 18 (GML), 42 to 43 (DI), and 66 to 68 (AWT). NADPH-binding positions include 17 to 18 (ML), 42 to 43 (DI), and 66 to 68 (AWT). 107 to 108 (TD) contributes to the dTDP-beta-L-rhamnose binding site. Positions 131 and 135 each coordinate NADH. Residues Tyr-131 and Lys-135 each coordinate NADPH. The active-site Proton donor/acceptor is the Tyr-131. Trp-157 is a dTDP-beta-L-rhamnose binding site.

Belongs to the dTDP-4-dehydrorhamnose reductase family. As to quaternary structure, homodimer. It depends on Mg(2+) as a cofactor.

The catalysed reaction is dTDP-beta-L-rhamnose + NADP(+) = dTDP-4-dehydro-beta-L-rhamnose + NADPH + H(+). It participates in carbohydrate biosynthesis; dTDP-L-rhamnose biosynthesis. Its pathway is antibiotic biosynthesis; streptomycin biosynthesis. Functionally, involved in the biosynthesis of the streptose moiety of streptomycin. Catalyzes the reduction of dTDP-6-deoxy-L-lyxo-4-hexulose to yield dTDP-L-rhamnose. RmlD uses NADH and NADPH nearly equally well. The chain is dTDP-4-dehydrorhamnose reductase from Streptomyces griseus.